The following is a 102-amino-acid chain: Small ribosomal subunit protein uS10 (102 aa).

Belongs to the universal ribosomal protein uS10 family. In terms of assembly, part of the 30S ribosomal subunit.

In terms of biological role, involved in the binding of tRNA to the ribosomes. The protein is Small ribosomal subunit protein uS10 of Moorella thermoacetica (strain ATCC 39073 / JCM 9320).